We begin with the raw amino-acid sequence, 318 residues long: uncharacterized protein (318 aa).

The protein belongs to the glycosyltransferase 2 family.

This is an uncharacterized protein from Rickettsia prowazekii (strain Madrid E).